Consider the following 321-residue polypeptide: Tetraacyldisaccharide 4'-kinase (321 aa).

54–61 (SVGGTGKT) provides a ligand contact to ATP.

Belongs to the LpxK family.

It carries out the reaction a lipid A disaccharide + ATP = a lipid IVA + ADP + H(+). It functions in the pathway glycolipid biosynthesis; lipid IV(A) biosynthesis; lipid IV(A) from (3R)-3-hydroxytetradecanoyl-[acyl-carrier-protein] and UDP-N-acetyl-alpha-D-glucosamine: step 6/6. In terms of biological role, transfers the gamma-phosphate of ATP to the 4'-position of a tetraacyldisaccharide 1-phosphate intermediate (termed DS-1-P) to form tetraacyldisaccharide 1,4'-bis-phosphate (lipid IVA). The polypeptide is Tetraacyldisaccharide 4'-kinase (Rickettsia africae (strain ESF-5)).